A 559-amino-acid chain; its full sequence is Alpha-(1,6)-fucosyltransferase (559 aa).

Residues M1–C4 lie on the Cytoplasmic side of the membrane. A helical; Signal-anchor for type II membrane protein membrane pass occupies residues I5 to L24. Over S25–D559 the chain is Lumenal. A glycan (N-linked (GlcNAc...) asparagine) is linked at N27. Over residues Q63–E74 the composition is skewed to basic and acidic residues. The disordered stretch occupies residues Q63–K90. The segment covering P80–K90 has biased composition (pro residues). N-linked (GlcNAc...) asparagine glycosylation is present at N134. 3 disulfide bridges follow: C188–C251, C196–C214, and C202–C206. In terms of domain architecture, GT23 spans E190–L480. Residues R351 to R352 are important for donor substrate binding. A disulfide bond links C452 and C459. Residues Q489–R550 enclose the SH3 domain.

It belongs to the glycosyltransferase 23 family. Mn(2+) is required as a cofactor. It depends on Mg(2+) as a cofactor.

It is found in the golgi apparatus. The protein localises to the golgi stack membrane. The enzyme catalyses N(4)-{beta-D-GlcNAc-(1-&gt;2)-alpha-D-Man-(1-&gt;3)-[beta-D-GlcNAc-(1-&gt;2)-alpha-D-Man-(1-&gt;6)]-beta-D-Man-(1-&gt;4)-beta-D-GlcNAc-(1-&gt;4)-beta-D-GlcNAc}-L-asparaginyl-[protein] + GDP-beta-L-fucose = an N(4)-{beta-D-GlcNAc-(1-&gt;2)-alpha-D-Man-(1-&gt;3)-[beta-D-GlcNAc-(1-&gt;2)-alpha-D-Man-(1-&gt;6)]-beta-D-Man-(1-&gt;4)-beta-D-GlcNAc-(1-&gt;4)-[alpha-L-Fuc-(1-&gt;6)]-beta-D-GlcNAc}-L-asparaginyl-[protein] + GDP + H(+). It participates in protein modification; protein glycosylation. Inhibited by Fe(3+), Ni(2+) and Cu(2+). In terms of biological role, catalyzes the addition of fucose in alpha 1-6 linkage to the first GlcNAc residue, next to the peptide chains in N-glycans. The addition is prevented if the GlcNAc residue is already fucosylated. Involved in susceptibility to the nematotoxic C.cinerea galectin Cgl2, likely by contributing to the synthesis of core alpha-1,6-fucosylated N-glycans to which Cgl2 binds. The sequence is that of Alpha-(1,6)-fucosyltransferase from Caenorhabditis elegans.